Here is a 247-residue protein sequence, read N- to C-terminus: UPF0246 protein CD630_18230 (247 aa).

This sequence belongs to the UPF0246 family.

This chain is UPF0246 protein CD630_18230, found in Clostridioides difficile (strain 630) (Peptoclostridium difficile).